Here is a 156-residue protein sequence, read N- to C-terminus: Small ribosomal subunit protein uS7 (156 aa).

Belongs to the universal ribosomal protein uS7 family. Part of the 30S ribosomal subunit. Contacts proteins S9 and S11.

Functionally, one of the primary rRNA binding proteins, it binds directly to 16S rRNA where it nucleates assembly of the head domain of the 30S subunit. Is located at the subunit interface close to the decoding center, probably blocks exit of the E-site tRNA. This Actinobacillus succinogenes (strain ATCC 55618 / DSM 22257 / CCUG 43843 / 130Z) protein is Small ribosomal subunit protein uS7.